An 88-amino-acid polypeptide reads, in one-letter code: Insertion element ISR1 uncharacterized 10 kDa protein A3 (88 aa).

The protein belongs to the transposase 8 family.

In Rhizobium sp, this protein is Insertion element ISR1 uncharacterized 10 kDa protein A3.